We begin with the raw amino-acid sequence, 405 residues long: MSAQPISDFYAYPDAAGHFGKFGGRFVAETLIGPLQELSAAYDQARQDPSFIAEYDKDLKHYVGRPSPIYHAERLSREVGGAQILLKREDLNHTGAHKINNTIGQALLASRMGKTRIIAETGAGQHGVASATVAARLGLECLVYMGATDIERQKINVYRMKLLGATVIPVTSGSATLKDALNEAMRDWVTNVRDTFYIIGTVAGPDPYPRMVRDFNAIVGRESRAQMLEDYGRLPDAISACVGGGSNAIGLFHAFLNDPGVKIYGAEAAGDGIATGRHAASIAAGRPGVLHGNRTYVICDDDGQITETHSISAGLDYPGVGPEHAFLSDSGRAVYQGITDDEAMAAFHLLAHTEGILAALESSHAVAQSIKLARELPKDALVLCNLSGRGDKDVHTIAAREGLAL.

At Lys-98 the chain carries N6-(pyridoxal phosphate)lysine.

This sequence belongs to the TrpB family. As to quaternary structure, tetramer of two alpha and two beta chains. It depends on pyridoxal 5'-phosphate as a cofactor.

It catalyses the reaction (1S,2R)-1-C-(indol-3-yl)glycerol 3-phosphate + L-serine = D-glyceraldehyde 3-phosphate + L-tryptophan + H2O. Its pathway is amino-acid biosynthesis; L-tryptophan biosynthesis; L-tryptophan from chorismate: step 5/5. In terms of biological role, the beta subunit is responsible for the synthesis of L-tryptophan from indole and L-serine. The protein is Tryptophan synthase beta chain of Xanthomonas oryzae pv. oryzae (strain MAFF 311018).